An 84-amino-acid polypeptide reads, in one-letter code: Toxin Ts4 (84 aa).

The N-terminal stretch at 1 to 19 (MKRMILFISCLLLIDIVVG) is a signal peptide. The 62-residue stretch at 21-82 (REGYPADSKG…IWTSETNKCG (62 aa)) folds into the LCN-type CS-alpha/beta domain. 4 cysteine pairs are disulfide-bonded: cysteine 31–cysteine 81, cysteine 35–cysteine 57, cysteine 43–cysteine 62, and cysteine 47–cysteine 64. Cysteine 81 carries the cysteine amide modification. The propeptide occupies 82-84 (GKK).

It belongs to the long (4 C-C) scorpion toxin superfamily. Sodium channel inhibitor family. Alpha subfamily. In terms of tissue distribution, expressed by the venom gland.

Its subcellular location is the secreted. Functionally, not toxic. Induces an immune response similar to that induced by whole venom. Induces a dose dependent release of the neurotransmitters glutamic acid and gamma aminobutyric acid from rat brain synaptosomes. Thus, polyclonal antibodies raised against this protein can neutralize the effects of the venom. This is Toxin Ts4 from Tityus serrulatus (Brazilian scorpion).